The following is a 475-amino-acid chain: Ribulose bisphosphate carboxylase large chain (475 aa).

Positions 1 to 2 (MV) are excised as a propeptide. P3 is modified (N-acetylproline). K14 carries the post-translational modification N6,N6,N6-trimethyllysine. The substrate site is built by N123 and T173. Residue K175 is the Proton acceptor of the active site. A substrate-binding site is contributed by K177. Positions 201, 203, and 204 each coordinate Mg(2+). N6-carboxylysine is present on K201. Residue H294 is the Proton acceptor of the active site. R295, H327, and S379 together coordinate substrate.

It belongs to the RuBisCO large chain family. Type I subfamily. In terms of assembly, heterohexadecamer of 8 large chains and 8 small chains; disulfide-linked. The disulfide link is formed within the large subunit homodimers. The cofactor is Mg(2+). Post-translationally, the disulfide bond which can form in the large chain dimeric partners within the hexadecamer appears to be associated with oxidative stress and protein turnover.

It localises to the plastid. Its subcellular location is the chloroplast. The catalysed reaction is 2 (2R)-3-phosphoglycerate + 2 H(+) = D-ribulose 1,5-bisphosphate + CO2 + H2O. It catalyses the reaction D-ribulose 1,5-bisphosphate + O2 = 2-phosphoglycolate + (2R)-3-phosphoglycerate + 2 H(+). In terms of biological role, ruBisCO catalyzes two reactions: the carboxylation of D-ribulose 1,5-bisphosphate, the primary event in carbon dioxide fixation, as well as the oxidative fragmentation of the pentose substrate in the photorespiration process. Both reactions occur simultaneously and in competition at the same active site. The protein is Ribulose bisphosphate carboxylase large chain of Tetradesmus obliquus (Green alga).